The primary structure comprises 562 residues: Glutamyl-tRNA(Gln) amidotransferase subunit B, chloroplastic/mitochondrial (562 aa).

Residues 48-76 (SVASNSKREPRPVKTRVMTQERGSGETQT) form a disordered region. Over residues 64–76 (VMTQERGSGETQT) the composition is skewed to polar residues.

Belongs to the GatB/GatE family. GatB subfamily. In terms of assembly, subunit of the heterotrimeric GatCAB amidotransferase (AdT) complex, composed of A, B and C subunits.

It is found in the mitochondrion. It localises to the plastid. The protein localises to the chloroplast. The enzyme catalyses L-glutamyl-tRNA(Gln) + L-glutamine + ATP + H2O = L-glutaminyl-tRNA(Gln) + L-glutamate + ADP + phosphate + H(+). In terms of biological role, allows the formation of correctly charged Gln-tRNA(Gln) through the transamidation of misacylated Glu-tRNA(Gln) in chloroplasts and mitochondria. The reaction takes place in the presence of glutamine and ATP through an activated gamma-phospho-Glu-tRNA(Gln). The polypeptide is Glutamyl-tRNA(Gln) amidotransferase subunit B, chloroplastic/mitochondrial (Physcomitrium patens (Spreading-leaved earth moss)).